The primary structure comprises 432 residues: UDP-N-acetylmuramate--L-alanine ligase (432 aa).

An ATP-binding site is contributed by 108–114 (GAHGKTS).

This sequence belongs to the MurCDEF family.

The protein resides in the cytoplasm. It carries out the reaction UDP-N-acetyl-alpha-D-muramate + L-alanine + ATP = UDP-N-acetyl-alpha-D-muramoyl-L-alanine + ADP + phosphate + H(+). It participates in cell wall biogenesis; peptidoglycan biosynthesis. In terms of biological role, cell wall formation. The polypeptide is UDP-N-acetylmuramate--L-alanine ligase (Bacillus velezensis (strain DSM 23117 / BGSC 10A6 / LMG 26770 / FZB42) (Bacillus amyloliquefaciens subsp. plantarum)).